The primary structure comprises 355 residues: DNA polymerase IV (355 aa).

Positions 4-185 (IIHIDMDCYF…LSLGKIPGVG (182 aa)) constitute a UmuC domain. Positions 8 and 103 each coordinate Mg(2+). The active site involves glutamate 104.

Belongs to the DNA polymerase type-Y family. In terms of assembly, monomer. Requires Mg(2+) as cofactor.

It is found in the cytoplasm. It catalyses the reaction DNA(n) + a 2'-deoxyribonucleoside 5'-triphosphate = DNA(n+1) + diphosphate. Functionally, poorly processive, error-prone DNA polymerase involved in untargeted mutagenesis. Copies undamaged DNA at stalled replication forks, which arise in vivo from mismatched or misaligned primer ends. These misaligned primers can be extended by PolIV. Exhibits no 3'-5' exonuclease (proofreading) activity. May be involved in translesional synthesis, in conjunction with the beta clamp from PolIII. The chain is DNA polymerase IV from Shewanella amazonensis (strain ATCC BAA-1098 / SB2B).